The chain runs to 379 residues: Alcohol dehydrogenase class-3 (379 aa).

Residues cysteine 47, histidine 69, cysteine 99, cysteine 102, cysteine 105, cysteine 113, and cysteine 176 each contribute to the Zn(2+) site.

The protein belongs to the zinc-containing alcohol dehydrogenase family. Class-III subfamily. Homodimer. It depends on Zn(2+) as a cofactor.

It is found in the cytoplasm. It carries out the reaction a primary alcohol + NAD(+) = an aldehyde + NADH + H(+). The catalysed reaction is a secondary alcohol + NAD(+) = a ketone + NADH + H(+). It catalyses the reaction S-(hydroxymethyl)glutathione + NADP(+) = S-formylglutathione + NADPH + H(+). The enzyme catalyses S-(hydroxymethyl)glutathione + NAD(+) = S-formylglutathione + NADH + H(+). Class-III ADH is remarkably ineffective in oxidizing ethanol, but it readily catalyzes the oxidation of long-chain primary alcohols and the oxidation of S-(hydroxymethyl) glutathione. The polypeptide is Alcohol dehydrogenase class-3 (adh5) (Dictyostelium discoideum (Social amoeba)).